Here is a 265-residue protein sequence, read N- to C-terminus: Undecaprenyl-diphosphatase (265 aa).

7 helical membrane-spanning segments follow: residues 42–62 (AATF…VLYW), 82–102 (GIVL…LLHA), 108–128 (LFRP…MILV), 157–177 (LALW…MLLG), 181–201 (PLAA…ATGY), 217–237 (FFLV…KVFV), and 244–264 (TLIP…YFMV).

It belongs to the UppP family.

It localises to the cell inner membrane. It catalyses the reaction di-trans,octa-cis-undecaprenyl diphosphate + H2O = di-trans,octa-cis-undecaprenyl phosphate + phosphate + H(+). Its function is as follows. Catalyzes the dephosphorylation of undecaprenyl diphosphate (UPP). Confers resistance to bacitracin. The sequence is that of Undecaprenyl-diphosphatase from Desulfovibrio desulfuricans (strain ATCC 27774 / DSM 6949 / MB).